The sequence spans 708 residues: Glycine--tRNA ligase beta subunit (708 aa).

Belongs to the class-II aminoacyl-tRNA synthetase family. As to quaternary structure, tetramer of two alpha and two beta subunits.

It is found in the cytoplasm. It carries out the reaction tRNA(Gly) + glycine + ATP = glycyl-tRNA(Gly) + AMP + diphosphate. This chain is Glycine--tRNA ligase beta subunit, found in Paracidovorax citrulli (strain AAC00-1) (Acidovorax citrulli).